The primary structure comprises 480 residues: Alpha-glucosidase (480 aa).

4 to 70 (VKIGIIGAGS…ADLKFEKTTS (67 aa)) serves as a coordination point for NAD(+). Substrate is bound by residues aspartate 119 and asparagine 153. Cysteine 174 serves as a coordination point for Mn(2+). Histidine 175 acts as the Proton donor in catalysis. Residue histidine 203 coordinates Mn(2+). Residue aspartate 260 is the Proton acceptor of the active site.

Belongs to the glycosyl hydrolase 4 family. In terms of assembly, homodimer. The cofactor is NAD(+). Mn(2+) serves as cofactor.

The enzyme catalyses Hydrolysis of terminal, non-reducing (1-&gt;4)-linked alpha-D-glucose residues with release of alpha-D-glucose.. With respect to regulation, inhibited by EDTA in vitro. Its function is as follows. Is able to hydrolyze diverse types of alpha-glycoside bonds in di- and trisaccharides: alpha-1,4 bonds of maltose and maltotriose, alpha-1,1 bonds of trehalose, alpha-1,2 bonds of sucrose, alpha-1,3 bonds of turanose and melizitose, alpha-1,6 bonds of isomaltose and melibiose. AglA is not specific with respect to the configuration at the C-4 position of its substrates because it also possesses alpha-galactosidase activity. Acts on the substrate from the non-reducing end of the chain. The activity of AglA drops with increasing length of the saccharide chain. Does not hydrolyze alpha-, beta-, and gamma-cyclodextrins or polysaccharides (starch, pullulan, amylose, amylopectin, glycogen). Does not cleave beta-glycosidic bonds in di-, oligo-, or polysaccharides. This Thermotoga neapolitana protein is Alpha-glucosidase (aglA).